The primary structure comprises 210 residues: MTNYFDSPFKGKLLSEQVKNPNIKVGRYSYYSGYYHGHSFDDCARYLFPDRDDVDKLIIGSFCSIGSGASFIMAGNQGHRYDWASSFPFFYMQEEPAFSSALDAFQKAGNTVIGNDVWIGSEAMVMPGIKIGHGAVIGSRSLVTKDVEPYAIVGGNPAKKIKKRFTDEEISLLLEMEWWNWSLEKIKAAMPMLCSSNIVGLHKYWLEFAV.

The active site involves His79.

It belongs to the transferase hexapeptide repeat family.

The enzyme catalyses chloramphenicol + acetyl-CoA = chloramphenicol 3-acetate + CoA. Functionally, this enzyme is an effector of chloramphenicol resistance in bacteria. The sequence is that of Chloramphenicol acetyltransferase (catB4) from Klebsiella aerogenes (Enterobacter aerogenes).